Consider the following 101-residue polypeptide: DNA-binding protein Fis (101 aa).

A DNA-binding region (H-T-H motif) is located at residues 77–96 (QTRAANMLGINRGTLRKKLK).

This sequence belongs to the transcriptional regulatory Fis family. In terms of assembly, homodimer.

Its function is as follows. Activates ribosomal RNA transcription. Plays a direct role in upstream activation of rRNA promoters. This Shewanella loihica (strain ATCC BAA-1088 / PV-4) protein is DNA-binding protein Fis.